Reading from the N-terminus, the 148-residue chain is Large ribosomal subunit protein bL9 (148 aa).

Belongs to the bacterial ribosomal protein bL9 family.

Functionally, binds to the 23S rRNA. The sequence is that of Large ribosomal subunit protein bL9 from Macrococcus caseolyticus (strain JCSC5402) (Macrococcoides caseolyticum).